The following is a 360-amino-acid chain: Aminomethyltransferase (360 aa).

Belongs to the GcvT family. As to quaternary structure, the glycine cleavage system is composed of four proteins: P, T, L and H.

It catalyses the reaction N(6)-[(R)-S(8)-aminomethyldihydrolipoyl]-L-lysyl-[protein] + (6S)-5,6,7,8-tetrahydrofolate = N(6)-[(R)-dihydrolipoyl]-L-lysyl-[protein] + (6R)-5,10-methylene-5,6,7,8-tetrahydrofolate + NH4(+). Functionally, the glycine cleavage system catalyzes the degradation of glycine. This Exiguobacterium sibiricum (strain DSM 17290 / CCUG 55495 / CIP 109462 / JCM 13490 / 255-15) protein is Aminomethyltransferase.